The primary structure comprises 231 residues: Sugar fermentation stimulation protein homolog (231 aa).

It belongs to the SfsA family.

This Citrifermentans bemidjiense (strain ATCC BAA-1014 / DSM 16622 / JCM 12645 / Bem) (Geobacter bemidjiensis) protein is Sugar fermentation stimulation protein homolog.